A 464-amino-acid chain; its full sequence is Argininosuccinate lyase (464 aa).

It belongs to the lyase 1 family. Argininosuccinate lyase subfamily.

The protein localises to the cytoplasm. The catalysed reaction is 2-(N(omega)-L-arginino)succinate = fumarate + L-arginine. It functions in the pathway amino-acid biosynthesis; L-arginine biosynthesis; L-arginine from L-ornithine and carbamoyl phosphate: step 3/3. The sequence is that of Argininosuccinate lyase from Crocosphaera subtropica (strain ATCC 51142 / BH68) (Cyanothece sp. (strain ATCC 51142)).